We begin with the raw amino-acid sequence, 266 residues long: Glucosamine-6-phosphate deaminase (266 aa).

Catalysis depends on Asp72, which acts as the Proton acceptor; for enolization step. Asp141 serves as the catalytic For ring-opening step. His143 functions as the Proton acceptor; for ring-opening step in the catalytic mechanism. Glu148 acts as the For ring-opening step in catalysis.

Belongs to the glucosamine/galactosamine-6-phosphate isomerase family. NagB subfamily. Homohexamer.

The enzyme catalyses alpha-D-glucosamine 6-phosphate + H2O = beta-D-fructose 6-phosphate + NH4(+). Its pathway is amino-sugar metabolism; N-acetylneuraminate degradation; D-fructose 6-phosphate from N-acetylneuraminate: step 5/5. With respect to regulation, allosterically activated by N-acetylglucosamine 6-phosphate (GlcNAc6P). Functionally, catalyzes the reversible isomerization-deamination of glucosamine 6-phosphate (GlcN6P) to form fructose 6-phosphate (Fru6P) and ammonium ion. The polypeptide is Glucosamine-6-phosphate deaminase (Salmonella typhimurium (strain LT2 / SGSC1412 / ATCC 700720)).